Reading from the N-terminus, the 330-residue chain is (11Z)-hexadec-11-enoyl-CoA conjugase (330 aa).

2 consecutive transmembrane segments (helical) span residues 37–57 and 65–85; these read IVVM…YGLY and LATS…ITAG. Positions 87-92 match the Histidine box-1 motif; that stretch reads HRLWSH. The chain crosses the membrane as a helical span at residues 101 to 121; the sequence is LEILLMVFNSIAFQNTIFTWV. Positions 124 to 128 match the Histidine box-2 motif; the sequence is HRLHH. 2 helical membrane-spanning segments follow: residues 185–205 and 216–238; these read AIPF…MYFW and TVLR…HLWG. Residues 264–268 carry the Histidine box-3 motif; sequence HNYHH.

Belongs to the fatty acid desaturase type 1 family. Requires Fe(2+) as cofactor. In terms of tissue distribution, highly expressed in the pheromone gland.

Its subcellular location is the membrane. The catalysed reaction is an 11,12-saturated fatty acyl-CoA + 2 Fe(II)-[cytochrome b5] + O2 + 2 H(+) = an (11Z)-Delta(11)-fatty acyl-CoA + 2 Fe(III)-[cytochrome b5] + 2 H2O. It catalyses the reaction (11Z)-hexadecenoyl-CoA + AH2 + O2 = (10E,12Z)-hexadecadienoyl-CoA + A + 2 H2O. In terms of biological role, fatty acid desaturase that catalyzes 2 consecutive steps in the biosynthesis of bombykol, a sex pheromone produced by the moth. First acts as an acyl-CoA Delta(11) desaturase (1) by catalyzing the formation of Delta(11) fatty acyl precursors. Then acts as a (11Z)-hexadec-11-enoyl-CoA conjugase (2) by converting a single cis double bond at position 11 of (11Z)-hexadec-11-enoyl-CoA into conjugated 10 trans and 12 cis double bonds. The protein is (11Z)-hexadec-11-enoyl-CoA conjugase of Bombyx mori (Silk moth).